The sequence spans 480 residues: Aspartyl/glutamyl-tRNA(Asn/Gln) amidotransferase subunit B (480 aa).

The protein belongs to the GatB/GatE family. GatB subfamily. In terms of assembly, heterotrimer of A, B and C subunits.

It carries out the reaction L-glutamyl-tRNA(Gln) + L-glutamine + ATP + H2O = L-glutaminyl-tRNA(Gln) + L-glutamate + ADP + phosphate + H(+). It catalyses the reaction L-aspartyl-tRNA(Asn) + L-glutamine + ATP + H2O = L-asparaginyl-tRNA(Asn) + L-glutamate + ADP + phosphate + 2 H(+). Allows the formation of correctly charged Asn-tRNA(Asn) or Gln-tRNA(Gln) through the transamidation of misacylated Asp-tRNA(Asn) or Glu-tRNA(Gln) in organisms which lack either or both of asparaginyl-tRNA or glutaminyl-tRNA synthetases. The reaction takes place in the presence of glutamine and ATP through an activated phospho-Asp-tRNA(Asn) or phospho-Glu-tRNA(Gln). In Streptococcus agalactiae serotype III (strain NEM316), this protein is Aspartyl/glutamyl-tRNA(Asn/Gln) amidotransferase subunit B.